Reading from the N-terminus, the 75-residue chain is Small ribosomal subunit protein bS18 (75 aa).

The protein belongs to the bacterial ribosomal protein bS18 family. As to quaternary structure, part of the 30S ribosomal subunit. Forms a tight heterodimer with protein bS6.

Its function is as follows. Binds as a heterodimer with protein bS6 to the central domain of the 16S rRNA, where it helps stabilize the platform of the 30S subunit. The chain is Small ribosomal subunit protein bS18 from Mycoplasma mycoides subsp. mycoides SC (strain CCUG 32753 / NCTC 10114 / PG1).